Consider the following 50-residue polypeptide: Large ribosomal subunit protein eL39 (50 aa).

This sequence belongs to the eukaryotic ribosomal protein eL39 family.

In Archaeoglobus fulgidus (strain ATCC 49558 / DSM 4304 / JCM 9628 / NBRC 100126 / VC-16), this protein is Large ribosomal subunit protein eL39 (rpl39e).